The primary structure comprises 102 residues: Antitoxin VapB46 (102 aa).

Belongs to the phD/YefM antitoxin family.

Antitoxin component of a type II toxin-antitoxin (TA) system. Neutralizes the effect of cognate toxin VapC46. The polypeptide is Antitoxin VapB46 (vapB46) (Mycobacterium tuberculosis (strain CDC 1551 / Oshkosh)).